A 511-amino-acid polypeptide reads, in one-letter code: ATP synthase subunit alpha (511 aa).

169–176 (GDRQTGKT) lines the ATP pocket.

Belongs to the ATPase alpha/beta chains family. In terms of assembly, F-type ATPases have 2 components, CF(1) - the catalytic core - and CF(0) - the membrane proton channel. CF(1) has five subunits: alpha(3), beta(3), gamma(1), delta(1), epsilon(1). CF(0) has three main subunits: a(1), b(2) and c(9-12). The alpha and beta chains form an alternating ring which encloses part of the gamma chain. CF(1) is attached to CF(0) by a central stalk formed by the gamma and epsilon chains, while a peripheral stalk is formed by the delta and b chains.

It is found in the cell inner membrane. The catalysed reaction is ATP + H2O + 4 H(+)(in) = ADP + phosphate + 5 H(+)(out). Produces ATP from ADP in the presence of a proton gradient across the membrane. The alpha chain is a regulatory subunit. In Bartonella henselae (strain ATCC 49882 / DSM 28221 / CCUG 30454 / Houston 1) (Rochalimaea henselae), this protein is ATP synthase subunit alpha.